The following is a 339-amino-acid chain: N-acetyl-gamma-glutamyl-phosphate reductase (339 aa).

Residue Cys145 is part of the active site.

This sequence belongs to the NAGSA dehydrogenase family. Type 1 subfamily.

It localises to the cytoplasm. The enzyme catalyses N-acetyl-L-glutamate 5-semialdehyde + phosphate + NADP(+) = N-acetyl-L-glutamyl 5-phosphate + NADPH + H(+). The protein operates within amino-acid biosynthesis; L-arginine biosynthesis; N(2)-acetyl-L-ornithine from L-glutamate: step 3/4. Its function is as follows. Catalyzes the NADPH-dependent reduction of N-acetyl-5-glutamyl phosphate to yield N-acetyl-L-glutamate 5-semialdehyde. The protein is N-acetyl-gamma-glutamyl-phosphate reductase of Thermotoga sp. (strain RQ2).